The sequence spans 194 residues: MSNITITEAAQTHFANLLGQQPDGTNIRVFVVNPGTQNAECGVSYCPPEAVEATDTEIPYQSFSAYVDELSLPFLEDAEIDYVTDKMGSQLTLKAPNAKMRKVADDAPLLERVEYAIQTQVNPQLAGHGGHVKLMEITDAGVAIVAFGGGCNGCSMVDVTLKEGIEKELLQQFSGELTAVRDATEHDRGDHSYY.

[4Fe-4S] cluster contacts are provided by Cys-151 and Cys-154.

This sequence belongs to the NfuA family. In terms of assembly, homodimer. The cofactor is [4Fe-4S] cluster.

In terms of biological role, involved in iron-sulfur cluster biogenesis. Binds a 4Fe-4S cluster, can transfer this cluster to apoproteins, and thereby intervenes in the maturation of Fe/S proteins. Could also act as a scaffold/chaperone for damaged Fe/S proteins. The chain is Fe/S biogenesis protein NfuA from Vibrio vulnificus (strain CMCP6).